Here is a 351-residue protein sequence, read N- to C-terminus: 1-acylglycerol-3-phosphate O-acyltransferase ABHD5 (351 aa).

One can recognise an AB hydrolase-1 domain in the interval 79 to 184 (PLVLLHGFGG…LILVEPWGFP (106 aa)). Ser124 is subject to Phosphoserine. The HXXXXD motif signature appears at 329–334 (HYVYAD).

The protein belongs to the peptidase S33 family. ABHD4/ABHD5 subfamily. Interacts with ADRP. Interacts with PLIN. Interacts with and PNPLA2. Interacts with PLIN5; promotes interaction with PNPLA2. In terms of tissue distribution, highly expressed in the adipose tissue and testes. Weakly expressed in the liver, muscle, kidney, and heart. Expressed by upper epidermal layers and dermal fibroblasts in skin, hepatocytes and hypothalamus in brain (at protein level).

It localises to the cytoplasm. The protein localises to the lipid droplet. The protein resides in the cytosol. It catalyses the reaction a 1-acyl-sn-glycero-3-phosphate + an acyl-CoA = a 1,2-diacyl-sn-glycero-3-phosphate + CoA. The catalysed reaction is 1-(9Z-octadecenoyl)-sn-glycero-3-phosphate + (9Z)-octadecenoyl-CoA = 1,2-di-(9Z-octadecenoyl)-sn-glycero-3-phosphate + CoA. The enzyme catalyses 1-(9Z-octadecenoyl)-sn-glycero-3-phosphate + hexadecanoyl-CoA = 1-(9Z)-octadecenoyl-2-hexadecanoyl-sn-glycero-3-phosphate + CoA. It carries out the reaction 1-(9Z-octadecenoyl)-sn-glycero-3-phosphate + octadecanoyl-CoA = 1-(9Z-octadecenoyl)-2-octadecanoyl-sn-glycero-3-phosphate + CoA. It catalyses the reaction 1-(9Z-octadecenoyl)-sn-glycero-3-phosphate + (5Z,8Z,11Z,14Z)-eicosatetraenoyl-CoA = 1-(9Z)-octadecenoyl-2-(5Z,8Z,11Z,14Z)-eicosatetraenoyl-sn-glycero-3-phosphate + CoA. The catalysed reaction is eicosanoyl-CoA + 1-(9Z-octadecenoyl)-sn-glycero-3-phosphate = 1-(9Z)-octadecenoyl-2-eicosanoyl-sn-glycero-3-phosphate + CoA. The enzyme catalyses 1-hexadecanoyl-sn-glycero-3-phosphate + (9Z)-octadecenoyl-CoA = 1-hexadecanoyl-2-(9Z-octadecenoyl)-sn-glycero-3-phosphate + CoA. It carries out the reaction 1-octadecanoyl-sn-glycero-3-phosphate + (9Z)-octadecenoyl-CoA = 1-octadecanoyl-2-(9Z-octadecenoyl)-sn-glycero-3-phosphate + CoA. It catalyses the reaction 1-(5Z,8Z,11Z,14Z-eicosatetraenoyl)-sn-glycero-3-phosphate + (9Z)-octadecenoyl-CoA = 1-(5Z,8Z,11Z,14Z)-eicosatetraenoyl-2-(9Z)-octadecenoyl-sn-glycero-3-phosphate + CoA. Its activity is regulated as follows. Acyltransferase activity is inhibited by detergents such as Triton X-100 and 3-[(3-cholamidopropyl)dimethylammonio]-1-propanesulfonate (CHAPS). Acyltransferase activity is inhibited by the presence of magnesium and calcium. Its function is as follows. Coenzyme A-dependent lysophosphatidic acid acyltransferase that catalyzes the transfer of an acyl group on a lysophosphatidic acid. Functions preferentially with 1-oleoyl-lysophosphatidic acid followed by 1-palmitoyl-lysophosphatidic acid, 1-stearoyl-lysophosphatidic acid and 1-arachidonoyl-lysophosphatidic acid as lipid acceptor. Functions preferentially with arachidonoyl-CoA followed by oleoyl-CoA as acyl group donors. Functions in phosphatidic acid biosynthesis. May regulate the cellular storage of triacylglycerol through activation of the phospholipase PNPLA2. Involved in keratinocyte differentiation. Regulates lipid droplet fusion. The chain is 1-acylglycerol-3-phosphate O-acyltransferase ABHD5 from Mus musculus (Mouse).